Consider the following 451-residue polypeptide: Histidinol dehydrogenase (451 aa).

Positions 1–20 (MLNVTDLRGHTPSKSDIRRA) are disordered. A compositionally biased stretch (basic and acidic residues) spans 7-19 (LRGHTPSKSDIRR). NAD(+) contacts are provided by tyrosine 129, glutamine 193, and asparagine 218. Substrate-binding residues include threonine 241, glutamine 263, and histidine 266. 2 residues coordinate Zn(2+): glutamine 263 and histidine 266. Active-site proton acceptor residues include glutamate 332 and histidine 333. Substrate is bound by residues histidine 333, aspartate 366, glutamate 420, and histidine 425. Residue aspartate 366 participates in Zn(2+) binding. Histidine 425 is a binding site for Zn(2+).

This sequence belongs to the histidinol dehydrogenase family. Requires Zn(2+) as cofactor.

The catalysed reaction is L-histidinol + 2 NAD(+) + H2O = L-histidine + 2 NADH + 3 H(+). The protein operates within amino-acid biosynthesis; L-histidine biosynthesis; L-histidine from 5-phospho-alpha-D-ribose 1-diphosphate: step 9/9. In terms of biological role, catalyzes the sequential NAD-dependent oxidations of L-histidinol to L-histidinaldehyde and then to L-histidine. The chain is Histidinol dehydrogenase from Corynebacterium efficiens (strain DSM 44549 / YS-314 / AJ 12310 / JCM 11189 / NBRC 100395).